We begin with the raw amino-acid sequence, 634 residues long: Threonine--tRNA ligase (634 aa).

The region spanning 1-61 (MINIRFPDGS…NSNCELRLIT (61 aa)) is the TGS domain. Residues 241-532 (DHRKIGKVLD…LIEHYAGNLP (292 aa)) form a catalytic region. Zn(2+)-binding residues include Cys-332, His-383, and His-509.

It belongs to the class-II aminoacyl-tRNA synthetase family. As to quaternary structure, homodimer. The cofactor is Zn(2+).

The protein localises to the cytoplasm. The enzyme catalyses tRNA(Thr) + L-threonine + ATP = L-threonyl-tRNA(Thr) + AMP + diphosphate + H(+). Its function is as follows. Catalyzes the attachment of threonine to tRNA(Thr) in a two-step reaction: L-threonine is first activated by ATP to form Thr-AMP and then transferred to the acceptor end of tRNA(Thr). Also edits incorrectly charged L-seryl-tRNA(Thr). This chain is Threonine--tRNA ligase, found in Francisella tularensis subsp. tularensis (strain FSC 198).